The primary structure comprises 201 residues: MSYIPVVIEQTSRGERAYDIYSRLLKERIIFVCSTVEDHMANLIVAQLLFLEAENPKKDIYMYINSPGGVVTAGLAIYDTMQFIKPKVATLCIGQACSMGSLLLCGGEHGMRYSLPHSRIMIHQPSGGYKGQATDIEIHARETLKIKKLLNELYSKHTEQALKHIEKSMERDNFMSPGEAKKFGLVDNIISSRDAMALLHK.

Ser98 functions as the Nucleophile in the catalytic mechanism. His123 is an active-site residue.

This sequence belongs to the peptidase S14 family. As to quaternary structure, fourteen ClpP subunits assemble into 2 heptameric rings which stack back to back to give a disk-like structure with a central cavity, resembling the structure of eukaryotic proteasomes.

The protein localises to the cytoplasm. It catalyses the reaction Hydrolysis of proteins to small peptides in the presence of ATP and magnesium. alpha-casein is the usual test substrate. In the absence of ATP, only oligopeptides shorter than five residues are hydrolyzed (such as succinyl-Leu-Tyr-|-NHMec, and Leu-Tyr-Leu-|-Tyr-Trp, in which cleavage of the -Tyr-|-Leu- and -Tyr-|-Trp bonds also occurs).. Its function is as follows. Cleaves peptides in various proteins in a process that requires ATP hydrolysis. Has a chymotrypsin-like activity. Plays a major role in the degradation of misfolded proteins. This is ATP-dependent Clp protease proteolytic subunit from Rickettsia typhi (strain ATCC VR-144 / Wilmington).